A 314-amino-acid chain; its full sequence is Lipoyl synthase (314 aa).

Positions 61, 66, 72, 87, 91, 94, and 301 each coordinate [4Fe-4S] cluster. The Radical SAM core domain occupies 73–290 (FGRGTATFMI…EEEAKKMGFS (218 aa)).

The protein belongs to the radical SAM superfamily. Lipoyl synthase family. Requires [4Fe-4S] cluster as cofactor.

Its subcellular location is the cytoplasm. It carries out the reaction [[Fe-S] cluster scaffold protein carrying a second [4Fe-4S](2+) cluster] + N(6)-octanoyl-L-lysyl-[protein] + 2 oxidized [2Fe-2S]-[ferredoxin] + 2 S-adenosyl-L-methionine + 4 H(+) = [[Fe-S] cluster scaffold protein] + N(6)-[(R)-dihydrolipoyl]-L-lysyl-[protein] + 4 Fe(3+) + 2 hydrogen sulfide + 2 5'-deoxyadenosine + 2 L-methionine + 2 reduced [2Fe-2S]-[ferredoxin]. The protein operates within protein modification; protein lipoylation via endogenous pathway; protein N(6)-(lipoyl)lysine from octanoyl-[acyl-carrier-protein]: step 2/2. Functionally, catalyzes the radical-mediated insertion of two sulfur atoms into the C-6 and C-8 positions of the octanoyl moiety bound to the lipoyl domains of lipoate-dependent enzymes, thereby converting the octanoylated domains into lipoylated derivatives. The sequence is that of Lipoyl synthase from Dechloromonas aromatica (strain RCB).